The following is a 213-amino-acid chain: Proteasome subunit beta (213 aa).

A propeptide spans 1-11 (removed in mature form; by autocatalysis); it reads MPEQYQESMTG. Thr12 functions as the Nucleophile in the catalytic mechanism.

This sequence belongs to the peptidase T1B family. As to quaternary structure, the 20S proteasome core is composed of 14 alpha and 14 beta subunits that assemble into four stacked heptameric rings, resulting in a barrel-shaped structure. The two inner rings, each composed of seven catalytic beta subunits, are sandwiched by two outer rings, each composed of seven alpha subunits. The catalytic chamber with the active sites is on the inside of the barrel. Has a gated structure, the ends of the cylinder being occluded by the N-termini of the alpha-subunits. Is capped at one or both ends by the proteasome regulatory ATPase, PAN.

It is found in the cytoplasm. It catalyses the reaction Cleavage of peptide bonds with very broad specificity.. Its activity is regulated as follows. The formation of the proteasomal ATPase PAN-20S proteasome complex, via the docking of the C-termini of PAN into the intersubunit pockets in the alpha-rings, triggers opening of the gate for substrate entry. Interconversion between the open-gate and close-gate conformations leads to a dynamic regulation of the 20S proteasome proteolysis activity. Component of the proteasome core, a large protease complex with broad specificity involved in protein degradation. The chain is Proteasome subunit beta from Methanoregula boonei (strain DSM 21154 / JCM 14090 / 6A8).